Consider the following 2442-residue polypeptide: CREB-binding protein (2442 aa).

Disordered stretches follow at residues 1-41 (MAEN…NDLP) and 74-179 (LRGG…CMNA). A2 bears the N-acetylalanine mark. The segment covering 20–30 (PGFSANDSTDF) has biased composition (polar residues). Residues 80–90 (SSINPGIGNVS) are compositionally biased toward low complexity. Position 121 is a phosphoserine (S121). Positions 122–131 (PLSQGDSSAP) are enriched in polar residues. Residue S124 is modified to Phosphoserine; by ATM. Low complexity predominate over residues 136–150 (QAASTSGPTPAASQA). Polar residues predominate over residues 151 to 172 (LNPQAQKQVGLATSSPATSQTG). R220 carries the omega-N-methylarginine modification. The interaction with SRCAP stretch occupies residues 227–410 (PTPAMQGASS…GKACQVAHCA (184 aa)). Residues 266-290 (KMGITGNTSPFGQPFSQAGGQPMGA) are disordered. Residues 270–284 (TGNTSPFGQPFSQAG) are compositionally biased toward polar residues. A TAZ-type 1 zinc finger spans residues 347-433 (DPEKRKLIQQ…RHDCPVCLPL (87 aa)). Residues H363, C367, C380, C385, H394, C398, C404, C409, H418, C422, C427, and C430 each contribute to the Zn(2+) site. Residues 587 to 666 (GVRKGWHEHV…KIYKIQKELE (80 aa)) enclose the KIX domain. An asymmetric dimethylarginine mark is found at R601 and R625. K657 bears the N6-acetyllysine mark. Composition is skewed to polar residues over residues 794–805 (LPQNQFPSSSGA) and 814–823 (PAQTGVSQGQ). The tract at residues 794-1083 (LPQNQFPSSS…STSPSQPRKK (290 aa)) is disordered. Composition is skewed to pro residues over residues 844 to 860 (PCPP…PPPA) and 876 to 885 (GMTPPQPAAP). Low complexity-rich tracts occupy residues 886–929 (TQPS…VTPQ) and 937–952 (PSVA…PTPV). The span at 973-988 (PTPSSVASAETNSQQP) shows a compositional bias: polar residues. K998 participates in a covalent cross-link: Glycyl lysine isopeptide (Lys-Gly) (interchain with G-Cter in SUMO1). Residues 1011–1021 (GESKGEPRSEM) show a composition bias toward basic and acidic residues. At K1014 the chain carries N6-acetyllysine. S1030 carries the post-translational modification Phosphoserine. The segment covering 1032–1059 (VKEETDIAEQKSEPMEVDEKKPEVKVEV) has biased composition (basic and acidic residues). Residues K1033 and K1056 each participate in a glycyl lysine isopeptide (Lys-Gly) (interchain with G-Cter in SUMO1) cross-link. Positions 1066 to 1078 (SSNGTASQSTSPS) are enriched in low complexity. S1076 is subject to Phosphoserine. The Bromo domain occupies 1085-1192 (FKPEELRQAL…EVFEQEIDPV (108 aa)). Residues 1124-1170 (DYFDIVKNPMDLSTIKRKLDTGQYQEPWQYVDDVWLMFNNAWLYNRK) are interaction with histone. The interval 1162-1180 (NNAWLYNRKTSRVYKFCSK) is interaction with ASF1A. An N6-acetyllysine modification is found at K1216. A CBP/p300-type HAT domain is found at 1323 to 1700 (KFSAKRLQTT…MLVELHTQGQ (378 aa)). A phosphoserine; by IKKA mark is found at S1382 and S1386. The interaction with histone stretch occupies residues 1433 to 1435 (YLD). Acetyl-CoA contacts are provided by residues 1434–1436 (LDS), 1446–1447 (RT), I1493, R1498, and W1502. The interval 1460-1891 (YVKKLGYVTG…LPSPTSAPPG (432 aa)) is interaction with TRERF1. Residues 1556–1568 (LEQEEEERKKEES) show a composition bias toward basic and acidic residues. Positions 1556–1615 (LEQEEEERKKEESTAASETTEGSQGDSKNAKKKNNKKTNKNKSSISRANKKKPSMPNVSN) are disordered. Residues K1583, K1591, K1592, K1595, and K1597 each carry the N6-acetyllysine modification. Over residues 1585–1595 (AKKKNNKKTNK) the composition is skewed to basic residues. A ZZ-type zinc finger spans residues 1702–1750 (RFVYTCNECKHHVETRWHCTVCEDYDLCINCYNTKSHAHKMVKWGLGLD). Zn(2+)-binding residues include C1707, C1710, C1720, C1723, C1729, C1732, H1738, and H1740. N6-acetyllysine occurs at positions 1741 and 1744. Position 1763 is a phosphoserine (S1763). The segment at 1765 to 1846 (QESRRLSIQR…KCPVPFCLNI (82 aa)) adopts a TAZ-type 2 zinc-finger fold. Disordered stretches follow at residues 1874–1959 (TRNV…VEAA) and 1977–2028 (INNS…PLPQ). A compositionally biased stretch (pro residues) spans 1900-1912 (PQTPQPPAQPQPS). A compositionally biased stretch (polar residues) spans 1925–1940 (ARTQPPTTVSTGKPTS). A compositionally biased stretch (pro residues) spans 1943–1954 (PAPPPPAQPPPA). Low complexity predominate over residues 2018–2027 (PGQWQQAPLP). 3 positions are modified to phosphoserine: S2063, S2076, and S2079. 5 stretches are compositionally biased toward low complexity: residues 2112–2137 (QPGM…HQQP), 2146–2160 (QAGV…QQQA), 2196–2219 (QLLQ…QGSA), 2228–2263 (HGQF…SMGQ), and 2294–2305 (RILQQQQMKQQI). 2 disordered regions span residues 2112–2263 (QPGM…SMGQ) and 2294–2433 (RILQ…TTGD). Composition is skewed to polar residues over residues 2315-2327 (SPQQ…QPQA) and 2334-2343 (QIATSLSNQV). Residues 2349–2372 (VQSPRPQSQPPHSSPSPRIQPQPS) show a composition bias toward pro residues. S2351 bears the Phosphoserine mark. A compositionally biased stretch (polar residues) spans 2411-2424 (QLNTPSRSALSSEL).

As to quaternary structure, found in a complex containing NCOA2; NCOA3; IKKA; IKKB and IKBKG. Probably part of a complex with HIF1A and EP300. Interacts with GATA1; the interaction results in acetylation and enhancement of transcriptional activity of GATA1. Interacts with MAF and ZCCHC12. Interacts with DAXX; the interaction is dependent on CBP sumoylation and results in suppression of the transcriptional activity via recruitment of HDAC2 to DAXX. Interacts with phosphorylated CREB1. Interacts with CITED4 (C-terminal region). Interacts (via the TAZ-type 1 domain) with HIF1A. Interacts with SRCAP, CARM1, ELF3, MLLT7/FOXO4, N4BP2, NCOA1, NCOA3, NCOA6, PCAF, DDX5, DDX17, PELP1, PML, SMAD1, SMAD2, SMAD3, SPIB and TRERF1. Interacts with KLF1; the interaction results in acetylation of KLF1 and enhancement of its transcriptional activity. Interacts with MTDH. Interacts with NFATC4. Interacts with MAFG; the interaction acetylates MAFG in the basic region and stimulates NFE2 transcriptional activity through increasing its DNA-binding activity. Interacts with IRF2; the interaction acetylates IRF2 and regulates its activity on the H4 promoter. Interacts with IRF3 (when phosphorylated); forming the dsRNA-activated factor 1 (DRAF1), a complex which activates the transcription of the type I interferon genes. Interacts (via N-terminus) with SS18L1/CREST (via C-terminus). Interacts with MECOM. Interacts with CITED1 (via C-terminus). Interacts with FOXO1; the interaction acetylates FOXO1 and inhibits its transcriptional activity. Interacts with NPAS2, CLOCK and BMAL1. Interacts with ASF1A and ASF1B; this promotes histone acetylation. Interacts with acetylated TP53/p53 and with the acetylated histones H3 and H4. Interacts (via transactivation domain and C-terminus) with PCNA; the interaction occurs on chromatin in UV-irradiated damaged cells. Interacts with DHX9 (via N-terminus); this interaction mediates association with RNA polymerase II holoenzyme and stimulates CREB-dependent transcriptional activation. Interacts with SMAD4; negatively regulated by ZBTB7A. Interacts with DUX4 (via C-terminus). Forms a complex with KMT2A and CREB1. Interacts with DDX3X; this interaction may facilitate HNF4A acetylation. Interacts with MSX1; the interaction may inhibit MSX1 autoinactivation. Interacts with ACSS2. (Microbial infection) Interacts with HTLV-1 Tax, p30II and HBZ. In terms of assembly, (Microbial infection) Interacts with human herpes virus 8/HHV-8 protein vIRF-1; this interaction inhibits CREBBP binding to IRF3. As to quaternary structure, (Microbial infection) Interacts with HIV-1 Tat. Post-translationally, methylation of the KIX domain by CARM1 blocks association with CREB. This results in the blockade of CREB signaling, and in activation of apoptotic response. Phosphorylated by CHUK/IKKA at Ser-1382 and Ser-1386; these phosphorylations promote cell growth by switching the binding preference of CREBBP from TP53 to NF-kappa-B. Phosphorylated by _ at Ser-124 in response to DNA damage, promoting interaction with MRE11 and lactylation of MRE11. In terms of processing, sumoylation negatively regulates transcriptional activity via the recruitment of DAAX. Post-translationally, autoacetylation is required for binding to protein substrates, such as acetylated histones and acetylated TP53/p53. Autoacetylation is induced by glucose and fatty acids.

It localises to the cytoplasm. The protein resides in the nucleus. The catalysed reaction is L-lysyl-[histone] + acetyl-CoA = N(6)-acetyl-L-lysyl-[histone] + CoA + H(+). The enzyme catalyses L-lysyl-[protein] + acetyl-CoA = N(6)-acetyl-L-lysyl-[protein] + CoA + H(+). It catalyses the reaction (S)-lactoyl-CoA + L-lysyl-[protein] = N(6)-[(S)-lactoyl]-L-lysyl-[protein] + CoA + H(+). Its function is as follows. Acetylates histones, giving a specific tag for transcriptional activation. Mediates acetylation of histone H3 at 'Lys-18' and 'Lys-27' (H3K18ac and H3K27ac, respectively). Also acetylates non-histone proteins, like DDX21, FBL, IRF2, MAFG, NCOA3, POLR1E/PAF53 and FOXO1. Binds specifically to phosphorylated CREB and enhances its transcriptional activity toward cAMP-responsive genes. Acts as a coactivator of ALX1. Acts as a circadian transcriptional coactivator which enhances the activity of the circadian transcriptional activators: NPAS2-BMAL1 and CLOCK-BMAL1 heterodimers. Acetylates PCNA; acetylation promotes removal of chromatin-bound PCNA and its degradation during nucleotide excision repair (NER). Acetylates POLR1E/PAF53, leading to decreased association of RNA polymerase I with the rDNA promoter region and coding region. Acetylates DDX21, thereby inhibiting DDX21 helicase activity. Acetylates FBL, preventing methylation of 'Gln-105' of histone H2A (H2AQ104me). In addition to protein acetyltransferase, can use different acyl-CoA substrates, such as lactoyl-CoA, and is able to mediate protein lactylation. Catalyzes lactylation of MRE11 in response to DNA damage, thereby promoting DNA double-strand breaks (DSBs) via homologous recombination (HR). Functions as a transcriptional coactivator for SMAD4 in the TGF-beta signaling pathway. In Homo sapiens (Human), this protein is CREB-binding protein.